We begin with the raw amino-acid sequence, 393 residues long: Probable pectinesterase 8 (393 aa).

A signal peptide spans 1-19; it reads MKIISLSISIGIAIIAVLA. Residues Asn100, Asn113, Asn140, Asn156, and Asn163 are each glycosylated (N-linked (GlcNAc...) asparagine). Residue Thr165 coordinates substrate. Residue Asn182 is glycosylated (N-linked (GlcNAc...) asparagine). Position 200 (Gln200) interacts with substrate. Asp223 serves as the catalytic Proton donor. The active-site Nucleophile is Asp244. Residue Asn295 is glycosylated (N-linked (GlcNAc...) asparagine). Substrate is bound at residue Arg308. Asn350, Asn369, and Asn378 each carry an N-linked (GlcNAc...) asparagine glycan.

The protein belongs to the pectinesterase family. In terms of tissue distribution, expressed in siliques.

It is found in the secreted. Its subcellular location is the cell wall. It catalyses the reaction [(1-&gt;4)-alpha-D-galacturonosyl methyl ester](n) + n H2O = [(1-&gt;4)-alpha-D-galacturonosyl](n) + n methanol + n H(+). Its pathway is glycan metabolism; pectin degradation; 2-dehydro-3-deoxy-D-gluconate from pectin: step 1/5. In terms of biological role, acts in the modification of cell walls via demethylesterification of cell wall pectin. In Arabidopsis thaliana (Mouse-ear cress), this protein is Probable pectinesterase 8 (PME8).